Here is a 336-residue protein sequence, read N- to C-terminus: UPF0104 membrane protein MJ1595 (336 aa).

9 consecutive transmembrane segments (helical) span residues 9 to 29 (STIL…YIGL), 40 to 60 (NPEY…ILSA), 68 to 88 (ILGY…GLFI), 127 to 147 (VLDT…FVVT), 154 to 174 (YLIL…YLIA), 223 to 243 (WEVV…ILKL), 245 to 265 (LLFL…VYLI), 285 to 305 (VMIL…AVTL), and 306 to 326 (LDRL…MLII).

This sequence belongs to the UPF0104 family.

Its subcellular location is the cell membrane. This Methanocaldococcus jannaschii (strain ATCC 43067 / DSM 2661 / JAL-1 / JCM 10045 / NBRC 100440) (Methanococcus jannaschii) protein is UPF0104 membrane protein MJ1595.